The following is a 93-amino-acid chain: Mitochondrial import inner membrane translocase subunit TIM10 (93 aa).

Residues Met1–Asp31 form an interaction with transmembrane regions of transmembrane proteins in transit region. Positions Cys40–Cys65 match the Twin CX3C motif motif. Cystine bridges form between Cys40–Cys65 and Cys44–Cys61. Residues Asn73–Phe93 are required for heterohexamerization.

It belongs to the small Tim family. In terms of assembly, heterohexamer; composed of 3 copies of TIM9 and 3 copies of TIM10, named soluble 70 kDa complex. Associates directly with the TIM12 component of the TIM22 complex, whose core is composed of TIM18, TIM22 and TIM54. Interacts with the transmembrane regions of multi-pass transmembrane proteins in transit.

The protein localises to the mitochondrion inner membrane. Its subcellular location is the mitochondrion intermembrane space. Its function is as follows. Mitochondrial intermembrane chaperone that participates in the import and insertion of multi-pass transmembrane proteins into the mitochondrial inner membrane. Also required for the transfer of beta-barrel precursors from the TOM complex to the sorting and assembly machinery (SAM complex) of the outer membrane. Acts as a chaperone-like protein that protects the hydrophobic precursors from aggregation and guide them through the mitochondrial intermembrane space. Compared to TIM9, it may function as a substrate sensor. The chain is Mitochondrial import inner membrane translocase subunit TIM10 (TIM10) from Saccharomyces cerevisiae (strain ATCC 204508 / S288c) (Baker's yeast).